A 2372-amino-acid polypeptide reads, in one-letter code: Nonribosomal peptide synthase roqA (2372 aa).

The tract at residues 217–610 (EHCRSQPDAE…VGRKDREVKI (394 aa)) is adenylation 1. The interval 723–745 (AASSHSSTREQPSNQRDKEDVEL) is disordered. The span at 725–736 (SSHSSTREQPSN) shows a compositional bias: polar residues. The 74-residue stretch at 750–823 (SAKENTLCSV…KIARCTAESK (74 aa)) folds into the Carrier 1 domain. S784 bears the O-(pantetheine 4'-phosphoryl)serine mark. The tract at residues 856 to 1122 (EDIYPCTPLQ…FATFPFRTQL (267 aa)) is condensation 1. Residues 1290-1679 (QPNSEAVCAW…VGRKDTQVKL (390 aa)) form an adenylation 2 region. In terms of domain architecture, Carrier 2 spans 1819 to 1895 (KPTTEQERFV…LFCKHVILIQ (77 aa)). Residue S1856 is modified to O-(pantetheine 4'-phosphoryl)serine. The tract at residues 1962–2227 (TSNYTSTAIF…FNVLPCRIAI (266 aa)) is condensation 2.

It participates in alkaloid biosynthesis. Functionally, dipeptide synthase; part of the gene cluster that mediates the biosynthesis of the mycotoxins roquefortine C and meleagrin. The first stage is catalyzed by the dipeptide synthase roqA which condenses histidine and tryptophan to produce histidyltryptophanyldiketopiperazine (HTD). HTD is then converted to roquefortine C through two possible pathways. In the first pathway, prenyltransferase roqD transforms HTD to the intermediate roquefortine D, which is in turn converted to roquefortine C by the cytochrome P450 monooxygenase roqR. In the second pathway, HTD is first converted to the intermediate dehydrohistidyltryptophanyldi-ketopiperazine (DHTD) by roqR which is then prenylated by roqD to form roquefortine C. Roquefortine C can be further transformed to meleagrin via three more reactions including oxydation to glandicolin A by roqM, which is further reduced to glandicoline B by roqO. Finally, glandicoline B is converted to meleagrin by the glandicoline B O-methyltransferase roqN. More studies identified further branching and additional metabolites produced by the roquefortine/meleagrin cluster, including roquefortine F, roquefortine L, roquefortine M, roquefortine N and neoxaline. This Penicillium rubens (strain ATCC 28089 / DSM 1075 / NRRL 1951 / Wisconsin 54-1255) (Penicillium chrysogenum) protein is Nonribosomal peptide synthase roqA.